A 282-amino-acid polypeptide reads, in one-letter code: NADPH-dependent 7-cyano-7-deazaguanine reductase (282 aa).

88 to 90 is a substrate binding site; the sequence is IES. 90–91 serves as a coordination point for NADPH; the sequence is SK. Cys-190 (thioimide intermediate) is an active-site residue. Residue Asp-197 is the Proton donor of the active site. 229–230 is a binding site for substrate; that stretch reads HE. NADPH is bound at residue 258-259; the sequence is RG.

The protein belongs to the GTP cyclohydrolase I family. QueF type 2 subfamily. Homodimer.

Its subcellular location is the cytoplasm. The catalysed reaction is 7-aminomethyl-7-carbaguanine + 2 NADP(+) = 7-cyano-7-deazaguanine + 2 NADPH + 3 H(+). It functions in the pathway tRNA modification; tRNA-queuosine biosynthesis. Catalyzes the NADPH-dependent reduction of 7-cyano-7-deazaguanine (preQ0) to 7-aminomethyl-7-deazaguanine (preQ1). In Salmonella paratyphi C (strain RKS4594), this protein is NADPH-dependent 7-cyano-7-deazaguanine reductase.